We begin with the raw amino-acid sequence, 293 residues long: D-alanine--D-alanine ligase (293 aa).

Residues 98-291 form the ATP-grasp domain; the sequence is KIIWKQHNLT…FNKLVVAIIN (194 aa). Residue 124 to 177 participates in ATP binding; that stretch reads DFPLPWMVKPTLEGSSIGISKVDSQIQLNNALMLAWQYNSHALIEQWIEGDEYT. Positions 245, 258, and 260 each coordinate Mg(2+).

It belongs to the D-alanine--D-alanine ligase family. The cofactor is Mg(2+). Requires Mn(2+) as cofactor.

The protein resides in the cytoplasm. It catalyses the reaction 2 D-alanine + ATP = D-alanyl-D-alanine + ADP + phosphate + H(+). It participates in cell wall biogenesis; peptidoglycan biosynthesis. In terms of biological role, cell wall formation. In Ruthia magnifica subsp. Calyptogena magnifica, this protein is D-alanine--D-alanine ligase.